Consider the following 275-residue polypeptide: T-cell ecto-ADP-ribosyltransferase 1 (275 aa).

The signal sequence occupies residues 1–20; sequence MPSNICKFFLTWWLIQQVTG. 2 cysteine pairs are disulfide-bonded: cysteine 41–cysteine 243 and cysteine 141–cysteine 193. Residue asparagine 58 is glycosylated (N-linked (GlcNAc...) asparagine). Positions 61 to 238 constitute a TR mART core domain; it reads EKLKVAWEEA…IFLDSPKRKK (178 aa). Tyrosine 98, arginine 146, and glutamine 164 together coordinate NAD(+). Residue arginine 146 is part of the active site. Serine 167 is a catalytic residue. Serine 202 is a binding site for NAD(+). Glutamate 209 is an active-site residue. Serine 246 carries GPI-anchor amidated serine lipidation. Residues 247–275 constitute a propeptide, removed in mature form; sequence SAGTRESCVSLFLVVLTSLLVQLLCLAEP.

This sequence belongs to the Arg-specific ADP-ribosyltransferase family. In terms of tissue distribution, postthymic T-cells.

The protein resides in the cell membrane. It carries out the reaction L-arginyl-[protein] + NAD(+) = N(omega)-(ADP-D-ribosyl)-L-arginyl-[protein] + nicotinamide + H(+). The enzyme catalyses NAD(+) + H2O = ADP-D-ribose + nicotinamide + H(+). In terms of biological role, has NAD(+) glycohydrolase activity and extremely low ADP-ribosyltransferase activity. The polypeptide is T-cell ecto-ADP-ribosyltransferase 1 (Art2a) (Rattus norvegicus (Rat)).